A 165-amino-acid chain; its full sequence is Large ribosomal subunit protein uL10 (165 aa).

It belongs to the universal ribosomal protein uL10 family. As to quaternary structure, part of the ribosomal stalk of the 50S ribosomal subunit. The N-terminus interacts with L11 and the large rRNA to form the base of the stalk. The C-terminus forms an elongated spine to which L12 dimers bind in a sequential fashion forming a multimeric L10(L12)X complex.

In terms of biological role, forms part of the ribosomal stalk, playing a central role in the interaction of the ribosome with GTP-bound translation factors. This is Large ribosomal subunit protein uL10 from Paraburkholderia phymatum (strain DSM 17167 / CIP 108236 / LMG 21445 / STM815) (Burkholderia phymatum).